A 280-amino-acid chain; its full sequence is Release factor glutamine methyltransferase (280 aa).

S-adenosyl-L-methionine contacts are provided by residues 120-124 (GTGSG), D143, and N186. Residue 186–189 (NPPY) coordinates substrate.

It belongs to the protein N5-glutamine methyltransferase family. PrmC subfamily.

The catalysed reaction is L-glutaminyl-[peptide chain release factor] + S-adenosyl-L-methionine = N(5)-methyl-L-glutaminyl-[peptide chain release factor] + S-adenosyl-L-homocysteine + H(+). In terms of biological role, methylates the class 1 translation termination release factors RF1/PrfA and RF2/PrfB on the glutamine residue of the universally conserved GGQ motif. The polypeptide is Release factor glutamine methyltransferase (Koribacter versatilis (strain Ellin345)).